The sequence spans 81 residues: ATP synthase subunit c, chloroplastic (81 aa).

The next 2 helical transmembrane spans lie at 3–23 (PLIAAASVIAAGLAVGLASIG) and 57–77 (LAFMEALTIYGLVVALALLFA).

Belongs to the ATPase C chain family. As to quaternary structure, F-type ATPases have 2 components, F(1) - the catalytic core - and F(0) - the membrane proton channel. F(1) has five subunits: alpha(3), beta(3), gamma(1), delta(1), epsilon(1). F(0) has four main subunits: a(1), b(1), b'(1) and c(10-14). The alpha and beta chains form an alternating ring which encloses part of the gamma chain. F(1) is attached to F(0) by a central stalk formed by the gamma and epsilon chains, while a peripheral stalk is formed by the delta, b and b' chains.

It localises to the plastid. Its subcellular location is the chloroplast thylakoid membrane. Its function is as follows. F(1)F(0) ATP synthase produces ATP from ADP in the presence of a proton or sodium gradient. F-type ATPases consist of two structural domains, F(1) containing the extramembraneous catalytic core and F(0) containing the membrane proton channel, linked together by a central stalk and a peripheral stalk. During catalysis, ATP synthesis in the catalytic domain of F(1) is coupled via a rotary mechanism of the central stalk subunits to proton translocation. Key component of the F(0) channel; it plays a direct role in translocation across the membrane. A homomeric c-ring of between 10-14 subunits forms the central stalk rotor element with the F(1) delta and epsilon subunits. This Agrostis stolonifera (Creeping bentgrass) protein is ATP synthase subunit c, chloroplastic.